The chain runs to 510 residues: Laccase (510 aa).

Plastocyanin-like domains are found at residues 45-79, 99-174, 242-317, and 372-506; these read PTKL…LPLK, KTVV…LISD, YLEV…IVLK, and LTLT…MRPM. The Cu cation site is built by His103, His105, His151, and His153. His419, His422, His424, His491, Cys492, His493, His497, and Met502 together coordinate Cu cation.

The protein belongs to the multicopper oxidase family. Cu(2+) is required as a cofactor.

The catalysed reaction is 4 hydroquinone + O2 = 4 benzosemiquinone + 2 H2O. Its activity is regulated as follows. Resistant to alkali and organic solvents such as methanol, ethanol and acetone. Resistant to EDTA, which might be explained by the spatial protection of copper ions in the active sites. Inhibited by DMSO. Strongly inhibited by Fe(2+) and DTT. Its function is as follows. Multicopper oxidase that catalyzes the oxidation of a variety of substrates, including phenolic and non-phenolic compounds. Substrates include 2,6-dimethoxyphenol (2,6-DMP) and the non-phenolic compound 2,2'-azino-bis(3-ethylbenzothiazoline-6-sulfonic acid) (ABTS). Cannot use guaiacol and catechol. The chain is Laccase from Bacillus stratosphericus.